We begin with the raw amino-acid sequence, 883 residues long: DNA mismatch repair protein MutS (883 aa).

Gly-602 to Ser-609 lines the ATP pocket.

The protein belongs to the DNA mismatch repair MutS family.

In terms of biological role, this protein is involved in the repair of mismatches in DNA. It is possible that it carries out the mismatch recognition step. This protein has a weak ATPase activity. The protein is DNA mismatch repair protein MutS of Staphylococcus haemolyticus (strain JCSC1435).